Here is a 163-residue protein sequence, read N- to C-terminus: Deoxyuridine 5'-triphosphate nucleotidohydrolase (163 aa).

Residues 78–80 (RSG), Asn-91, and 95–97 (TVD) each bind substrate. Residues 140–151 (ERESLNETERGD) are compositionally biased toward basic and acidic residues. Residues 140 to 163 (ERESLNETERGDGGFGHTGVNSQP) are disordered.

The protein belongs to the dUTPase family. The cofactor is Mg(2+).

It carries out the reaction dUTP + H2O = dUMP + diphosphate + H(+). It functions in the pathway pyrimidine metabolism; dUMP biosynthesis; dUMP from dCTP (dUTP route): step 2/2. Functionally, this enzyme is involved in nucleotide metabolism: it produces dUMP, the immediate precursor of thymidine nucleotides and it decreases the intracellular concentration of dUTP so that uracil cannot be incorporated into DNA. The chain is Deoxyuridine 5'-triphosphate nucleotidohydrolase from Heliobacterium modesticaldum (strain ATCC 51547 / Ice1).